Here is a 246-residue protein sequence, read N- to C-terminus: Outer membrane protein assembly factor BamD (246 aa).

A signal peptide spans Met-1–Ser-22.

This sequence belongs to the BamD family. Part of the Bam complex.

Its subcellular location is the cell outer membrane. In terms of biological role, part of the outer membrane protein assembly complex, which is involved in assembly and insertion of beta-barrel proteins into the outer membrane. This Buchnera aphidicola subsp. Acyrthosiphon pisum (strain APS) (Acyrthosiphon pisum symbiotic bacterium) protein is Outer membrane protein assembly factor BamD.